Reading from the N-terminus, the 427-residue chain is Trigger factor (427 aa).

One can recognise a PPIase FKBP-type domain in the interval glycine 163–proline 248.

Belongs to the FKBP-type PPIase family. Tig subfamily.

The protein resides in the cytoplasm. The enzyme catalyses [protein]-peptidylproline (omega=180) = [protein]-peptidylproline (omega=0). Involved in protein export. Acts as a chaperone by maintaining the newly synthesized protein in an open conformation. Functions as a peptidyl-prolyl cis-trans isomerase. This is Trigger factor from Streptococcus pneumoniae (strain 70585).